Consider the following 270-residue polypeptide: Protein US2 homolog (270 aa).

It belongs to the herpesviridae US2 family.

In Gallid herpesvirus 2 (strain Chicken/Md5/ATCC VR-987) (GaHV-2), this protein is Protein US2 homolog (MDV091).